The chain runs to 139 residues: Holo-[acyl-carrier-protein] synthase (139 aa).

D8 and E57 together coordinate Mg(2+).

Belongs to the P-Pant transferase superfamily. AcpS family. The cofactor is Mg(2+).

The protein resides in the cytoplasm. It carries out the reaction apo-[ACP] + CoA = holo-[ACP] + adenosine 3',5'-bisphosphate + H(+). Transfers the 4'-phosphopantetheine moiety from coenzyme A to a Ser of acyl-carrier-protein. The polypeptide is Holo-[acyl-carrier-protein] synthase (Dinoroseobacter shibae (strain DSM 16493 / NCIMB 14021 / DFL 12)).